Here is a 261-residue protein sequence, read N- to C-terminus: Cytochrome c oxidase subunit 3 (261 aa).

The Mitochondrial matrix segment spans residues 1 to 15 (MTHQTHACHMVNPSP). Residues 16–34 (WPLTGALSGLLMTSGLIMW) form a helical membrane-spanning segment. At 35-40 (FHFNST) the chain is on the mitochondrial intermembrane side. A helical transmembrane segment spans residues 41-66 (TLLMLGLTTNMLTMYQWWRDVIREST). Residues 67 to 72 (FQGHHT) are Mitochondrial matrix-facing. The chain crosses the membrane as a helical span at residues 73–105 (PNVQKGLRYGMILFIISEVLFFTGFFWAFYHSS). At 106 to 128 (LAPTPELGGCWPPTGIHPLNPLE) the chain is on the mitochondrial intermembrane side. Residues 129–152 (VPLLNTSVLLASGVSITWAHHSLM) form a helical membrane-spanning segment. Residues 153-155 (EGN) lie on the Mitochondrial matrix side of the membrane. A helical transmembrane segment spans residues 156-183 (RNHMLQALFITIALGVYFTLLQASEYYE). Residues 184–190 (APFTISD) lie on the Mitochondrial intermembrane side of the membrane. A helical membrane pass occupies residues 191–223 (GVYGSTFFVATGFHGLHVIIGSTFLIVCFFRQL). Residues 224-232 (KFHFTSSHH) lie on the Mitochondrial matrix side of the membrane. A helical membrane pass occupies residues 233 to 256 (FGFEAAAWYWHFVDVVWLFLYVSI). The Mitochondrial intermembrane segment spans residues 257 to 261 (YWWGS).

The protein belongs to the cytochrome c oxidase subunit 3 family. In terms of assembly, component of the cytochrome c oxidase (complex IV, CIV), a multisubunit enzyme composed of 14 subunits. The complex is composed of a catalytic core of 3 subunits MT-CO1, MT-CO2 and MT-CO3, encoded in the mitochondrial DNA, and 11 supernumerary subunits COX4I, COX5A, COX5B, COX6A, COX6B, COX6C, COX7A, COX7B, COX7C, COX8 and NDUFA4, which are encoded in the nuclear genome. The complex exists as a monomer or a dimer and forms supercomplexes (SCs) in the inner mitochondrial membrane with NADH-ubiquinone oxidoreductase (complex I, CI) and ubiquinol-cytochrome c oxidoreductase (cytochrome b-c1 complex, complex III, CIII), resulting in different assemblies (supercomplex SCI(1)III(2)IV(1) and megacomplex MCI(2)III(2)IV(2)).

Its subcellular location is the mitochondrion inner membrane. The catalysed reaction is 4 Fe(II)-[cytochrome c] + O2 + 8 H(+)(in) = 4 Fe(III)-[cytochrome c] + 2 H2O + 4 H(+)(out). Functionally, component of the cytochrome c oxidase, the last enzyme in the mitochondrial electron transport chain which drives oxidative phosphorylation. The respiratory chain contains 3 multisubunit complexes succinate dehydrogenase (complex II, CII), ubiquinol-cytochrome c oxidoreductase (cytochrome b-c1 complex, complex III, CIII) and cytochrome c oxidase (complex IV, CIV), that cooperate to transfer electrons derived from NADH and succinate to molecular oxygen, creating an electrochemical gradient over the inner membrane that drives transmembrane transport and the ATP synthase. Cytochrome c oxidase is the component of the respiratory chain that catalyzes the reduction of oxygen to water. Electrons originating from reduced cytochrome c in the intermembrane space (IMS) are transferred via the dinuclear copper A center (CU(A)) of subunit 2 and heme A of subunit 1 to the active site in subunit 1, a binuclear center (BNC) formed by heme A3 and copper B (CU(B)). The BNC reduces molecular oxygen to 2 water molecules using 4 electrons from cytochrome c in the IMS and 4 protons from the mitochondrial matrix. The polypeptide is Cytochrome c oxidase subunit 3 (MT-CO3) (Gazella saudiya (Saudi gazelle)).